The following is a 450-amino-acid chain: Tubulin alpha-6 chain (450 aa).

Residues glutamine 11, glutamate 71, glycine 144, threonine 145, threonine 179, asparagine 206, and asparagine 228 each coordinate GTP. Residue glutamate 71 participates in Mg(2+) binding. The active site involves glutamate 254. A Phosphothreonine modification is found at threonine 349. Positions 430–450 (KDYEEVGAEGGDDEDDEGEEY) are disordered. Residues 431-450 (DYEEVGAEGGDDEDDEGEEY) show a composition bias toward acidic residues.

This sequence belongs to the tubulin family. As to quaternary structure, dimer of alpha and beta chains. A typical microtubule is a hollow water-filled tube with an outer diameter of 25 nm and an inner diameter of 15 nM. Alpha-beta heterodimers associate head-to-tail to form protofilaments running lengthwise along the microtubule wall with the beta-tubulin subunit facing the microtubule plus end conferring a structural polarity. Microtubules usually have 13 protofilaments but different protofilament numbers can be found in some organisms and specialized cells. Interacts with TFCB. The cofactor is Mg(2+). In terms of processing, undergoes a tyrosination/detyrosination cycle, the cyclic removal and re-addition of a C-terminal tyrosine residue by the enzymes tubulin tyrosine carboxypeptidase (TTCP) and tubulin tyrosine ligase (TTL), respectively. Acetylation of alpha chains at Lys-40 stabilizes microtubules and affects affinity and processivity of microtubule motors. This modification has a role in multiple cellular functions, ranging from cell motility, cell cycle progression or cell differentiation to intracellular trafficking and signaling.

It localises to the cytoplasm. The protein localises to the cytoskeleton. The enzyme catalyses GTP + H2O = GDP + phosphate + H(+). Tubulin is the major constituent of microtubules, a cylinder consisting of laterally associated linear protofilaments composed of alpha- and beta-tubulin heterodimers. Microtubules grow by the addition of GTP-tubulin dimers to the microtubule end, where a stabilizing cap forms. Below the cap, tubulin dimers are in GDP-bound state, owing to GTPase activity of alpha-tubulin. The polypeptide is Tubulin alpha-6 chain (TUBA6) (Arabidopsis thaliana (Mouse-ear cress)).